Consider the following 485-residue polypeptide: Glutamyl-tRNA(Gln) amidotransferase subunit A (485 aa).

Residues lysine 78 and serine 153 each act as charge relay system in the active site. The Acyl-ester intermediate role is filled by serine 177.

It belongs to the amidase family. GatA subfamily. As to quaternary structure, heterotrimer of A, B and C subunits.

It carries out the reaction L-glutamyl-tRNA(Gln) + L-glutamine + ATP + H2O = L-glutaminyl-tRNA(Gln) + L-glutamate + ADP + phosphate + H(+). Its function is as follows. Allows the formation of correctly charged Gln-tRNA(Gln) through the transamidation of misacylated Glu-tRNA(Gln) in organisms which lack glutaminyl-tRNA synthetase. The reaction takes place in the presence of glutamine and ATP through an activated gamma-phospho-Glu-tRNA(Gln). This Bacillus cereus (strain AH820) protein is Glutamyl-tRNA(Gln) amidotransferase subunit A.